A 257-amino-acid chain; its full sequence is Ribonuclease PH (257 aa).

Residues Arg-86 and 124-126 contribute to the phosphate site; that span reads GTR.

It belongs to the RNase PH family. Homohexameric ring arranged as a trimer of dimers.

It catalyses the reaction tRNA(n+1) + phosphate = tRNA(n) + a ribonucleoside 5'-diphosphate. Functionally, phosphorolytic 3'-5' exoribonuclease that plays an important role in tRNA 3'-end maturation. Removes nucleotide residues following the 3'-CCA terminus of tRNAs; can also add nucleotides to the ends of RNA molecules by using nucleoside diphosphates as substrates, but this may not be physiologically important. Probably plays a role in initiation of 16S rRNA degradation (leading to ribosome degradation) during starvation. This is Ribonuclease PH from Halalkalibacterium halodurans (strain ATCC BAA-125 / DSM 18197 / FERM 7344 / JCM 9153 / C-125) (Bacillus halodurans).